A 273-amino-acid polypeptide reads, in one-letter code: 2,3,4,5-tetrahydropyridine-2,6-dicarboxylate N-succinyltransferase (273 aa).

2 residues coordinate substrate: Arg-106 and Asp-143.

The protein belongs to the transferase hexapeptide repeat family. Homotrimer.

The protein resides in the cytoplasm. It catalyses the reaction (S)-2,3,4,5-tetrahydrodipicolinate + succinyl-CoA + H2O = (S)-2-succinylamino-6-oxoheptanedioate + CoA. It functions in the pathway amino-acid biosynthesis; L-lysine biosynthesis via DAP pathway; LL-2,6-diaminopimelate from (S)-tetrahydrodipicolinate (succinylase route): step 1/3. This Wolbachia pipientis wMel protein is 2,3,4,5-tetrahydropyridine-2,6-dicarboxylate N-succinyltransferase.